Reading from the N-terminus, the 123-residue chain is Small ribosomal subunit protein uS12 (123 aa).

Asp-89 is modified (3-methylthioaspartic acid). The segment at 102-123 (LDTQGVKDRKQGRSKYGAKRPK) is disordered. The segment covering 113-123 (GRSKYGAKRPK) has biased composition (basic residues).

It belongs to the universal ribosomal protein uS12 family. Part of the 30S ribosomal subunit. Contacts proteins S8 and S17. May interact with IF1 in the 30S initiation complex.

Functionally, with S4 and S5 plays an important role in translational accuracy. Its function is as follows. Interacts with and stabilizes bases of the 16S rRNA that are involved in tRNA selection in the A site and with the mRNA backbone. Located at the interface of the 30S and 50S subunits, it traverses the body of the 30S subunit contacting proteins on the other side and probably holding the rRNA structure together. The combined cluster of proteins S8, S12 and S17 appears to hold together the shoulder and platform of the 30S subunit. The sequence is that of Small ribosomal subunit protein uS12 from Magnetococcus marinus (strain ATCC BAA-1437 / JCM 17883 / MC-1).